A 159-amino-acid chain; its full sequence is Cytochrome c-type biogenesis protein CcmE (159 aa).

Topologically, residues 1-8 (MNLRRKNR) are cytoplasmic. The chain crosses the membrane as a helical; Signal-anchor for type II membrane protein span at residues 9–29 (LWVVCAVLAGLALTTALVLYA). The Periplasmic portion of the chain corresponds to 30–159 (LRANIDLFYT…PQRADKDTSS (130 aa)). The tract at residues 129–159 (KHDENYTPPEVEKAMQENHRRPQRADKDTSS) is disordered. Residues histidine 130 and tyrosine 134 each contribute to the heme site.

Belongs to the CcmE/CycJ family.

The protein resides in the cell inner membrane. In terms of biological role, heme chaperone required for the biogenesis of c-type cytochromes. Transiently binds heme delivered by CcmC and transfers the heme to apo-cytochromes in a process facilitated by CcmF and CcmH. This is Cytochrome c-type biogenesis protein CcmE from Salmonella paratyphi A (strain ATCC 9150 / SARB42).